The primary structure comprises 173 residues: MTRAFYIGRFQPYHFGHHTIIKQIAEEVDELVVGIGSAQKSHESTDPFTAGERVLMVYNALENLPIRHYVLPIEDIKYNSIWVHHVASRTPHFEVVYSNNPLVIQLFREAGVCVKQSPLYIRERYSGTEIRRRMIAGEKWEHLVPKSVVEVIKEIDGVTRLRNVSASDNNSSL.

Belongs to the archaeal NMN adenylyltransferase family.

The protein localises to the cytoplasm. It catalyses the reaction beta-nicotinamide D-ribonucleotide + ATP + H(+) = diphosphate + NAD(+). It functions in the pathway cofactor biosynthesis; NAD(+) biosynthesis; NAD(+) from nicotinamide D-ribonucleotide: step 1/1. This is Nicotinamide-nucleotide adenylyltransferase from Methanosarcina barkeri (strain Fusaro / DSM 804).